Consider the following 393-residue polypeptide: MDPKRSQKETVLITGGGGYFGFRLGCALNQKGVHVILFDISSPAETIPEGIKFIQGDICHLSDIEKAFQDADITCVFHIASYGMSGREQLNRNLIEEVNIGGTDNILQACQRRRVPRLVYTSTFNVIFGGQVIRNGDESLPYLPLHLHPDHYSRTKSIAEKKVLEANGTPLDRGDGVLRTCALRPAGIYGPGEQRHLPRIVSYIEKGLFKFVYGDPRSLVEFVHVDNLVQAHILASEALRADKGHIASGQPYFISDGRPVNNFEFFRPLVEGLGYTFPSTRLPLTLVYCFAFLTEMVHFILGRLYNFQPFLTRTEVYKTGVTHYFSLEKAKKELGYKAQPFDLQEAVEWFKAHGHGRSSGSRDSECFIWDGLLVFLLIIAVLIWLPSSVILSL.

The active-site Proton acceptor is Tyr152. Lys156 is an NAD(+) binding site. 2 consecutive transmembrane segments (helical) span residues 282 to 302 (LPLTLVYCFAFLTEMVHFILG) and 371 to 391 (GLLVFLLIIAVLIWLPSSVIL).

The protein belongs to the 3-beta-HSD family.

Its subcellular location is the membrane. The sequence is that of Short-chain dehydrogenase/reductase family 42E member 1 (SDR42E1) from Macaca fascicularis (Crab-eating macaque).